Here is a 233-residue protein sequence, read N- to C-terminus: 27 kDa hemolymph glycoprotein (233 aa).

A signal peptide spans 1–17 (MIWKTLIVAFMATAVLA). N-linked (GlcNAc...) asparagine glycosylation is found at Asn-125 and Asn-156.

The protein belongs to the UPF0408 family. Post-translationally, N-glycosylated. Hemolymph.

The protein localises to the secreted. This is 27 kDa hemolymph glycoprotein from Manduca sexta (Tobacco hawkmoth).